The sequence spans 411 residues: Squalene synthase (411 aa).

The NADP(+) site is built by Arg49 and Arg74. Positions 77, 80, and 81 each coordinate Mg(2+). Arg212, Lys312, and Arg314 together coordinate NADP(+). The chain crosses the membrane as a helical span at residues 388–408 (SPVLIVVIFIILAIILAQLFG).

The protein belongs to the phytoene/squalene synthase family. Mg(2+) is required as a cofactor.

Its subcellular location is the membrane. The catalysed reaction is 2 (2E,6E)-farnesyl diphosphate + NADH + H(+) = squalene + 2 diphosphate + NAD(+). It carries out the reaction 2 (2E,6E)-farnesyl diphosphate + NADPH + H(+) = squalene + 2 diphosphate + NADP(+). In terms of biological role, converts farnesyl diphosphate (FPP) into squalene, a precursor for sterol biosynthesis in eukaryotes. This Solanum lycopersicum (Tomato) protein is Squalene synthase.